The following is a 291-amino-acid chain: MKDYLVKAIDKTKNLRLITVDAKDLVSEAQKRHDTWSASSAVLGRTLIGGLLLSAALLKDKDELTVRLLGNGPVGATIVTAKADLTIKGYIQNPHIALPPKKDGHIDVAKAVGKDWLEVTKDQGLKEPYTGQVPIVSGEIAEDFTYYLAKSEQIPSAVGLSVFVEPNNEIGAAGGFILQALPGATDEQLAEVEKRIKALPNLSTLFLDGMTPENLAERILGTDCKILAKEDVSFACDCSKEKYSQILATLKPAQLKEMIEKDHGAELVCRFCKEKYHFTEDELKDVLKKAN.

2 disulfides stabilise this stretch: Cys236–Cys238 and Cys269–Cys272.

The protein belongs to the HSP33 family. Under oxidizing conditions two disulfide bonds are formed involving the reactive cysteines. Under reducing conditions zinc is bound to the reactive cysteines and the protein is inactive.

It is found in the cytoplasm. In terms of biological role, redox regulated molecular chaperone. Protects both thermally unfolding and oxidatively damaged proteins from irreversible aggregation. Plays an important role in the bacterial defense system toward oxidative stress. The sequence is that of 33 kDa chaperonin from Lactobacillus johnsonii (strain CNCM I-12250 / La1 / NCC 533).